The primary structure comprises 319 residues: Cytochrome f (319 aa).

Positions 1 to 35 (MQNKDACKSLSSWVSLSISLLVLTVPLIWPYNSTA) are cleaved as a signal peptide. Heme contacts are provided by phenylalanine 36, cysteine 56, cysteine 59, and histidine 60. Residues 285–305 (IQGLLVFFASVILAQIFLVLK) traverse the membrane as a helical segment.

Belongs to the cytochrome f family. In terms of assembly, the 4 large subunits of the cytochrome b6-f complex are cytochrome b6, subunit IV (17 kDa polypeptide, petD), cytochrome f and the Rieske protein, while the 4 small subunits are PetG, PetL, PetM and PetN. The complex functions as a dimer. It depends on heme as a cofactor.

It is found in the plastid. It localises to the chloroplast thylakoid membrane. In terms of biological role, component of the cytochrome b6-f complex, which mediates electron transfer between photosystem II (PSII) and photosystem I (PSI), cyclic electron flow around PSI, and state transitions. This Staurastrum punctulatum (Green alga) protein is Cytochrome f.